The sequence spans 277 residues: MTAQSQNIVETPSRVRAHALGVNAPELAKYQDEPAQMRSGAVGKSGYLKLRFAKREHCSILAEMERRVPSLVQKALYWDEEIPELPCVTMISTSGCILQGDRLATDVHVEAGACAHVTTQSATKVHMMNANYASQIQNFIVEEGGYLEFMPDPLIPHRNSRFITDTTISIHPTATAIYSEVLMSGRKYHHADERFGFDVYSSRVAAQNLAGKELFVEKYVLEPKVESLDAVGVMQTFDAFGNVILLTPKEHHDRILARVPAHFDIKGGDCQRRDAST.

It belongs to the UreD family. UreD, UreF and UreG form a complex that acts as a GTP-hydrolysis-dependent molecular chaperone, activating the urease apoprotein by helping to assemble the nickel containing metallocenter of UreC. The UreE protein probably delivers the nickel.

It is found in the cytoplasm. In terms of biological role, required for maturation of urease via the functional incorporation of the urease nickel metallocenter. This Yersinia pestis bv. Antiqua (strain Antiqua) protein is Urease accessory protein UreD.